We begin with the raw amino-acid sequence, 151 residues long: Ribosome maturation factor RimP (151 aa).

The protein belongs to the RimP family.

It is found in the cytoplasm. Its function is as follows. Required for maturation of 30S ribosomal subunits. This chain is Ribosome maturation factor RimP, found in Thermoanaerobacter pseudethanolicus (strain ATCC 33223 / 39E) (Clostridium thermohydrosulfuricum).